Here is a 362-residue protein sequence, read N- to C-terminus: Protein Tob1 (362 aa).

Residues 22 to 39 (RRRVNIFGEELERLLKKK) carry the Bipartite nuclear localization signal motif. The important for nuclear localization stretch occupies residues 82-92 (VRGNLPQDLSV). The segment covering 144 to 160 (DPASSVSSSPSPPFGHS) has biased composition (low complexity). A disordered region spans residues 144 to 171 (DPASSVSSSPSPPFGHSAAVSPTFMPRS). Residues 161 to 220 (AAVSPTFMPRSTQPLTFTTATFAATKFGSTKMKNSGRSSKVARTSPINLGLTVNVNDLLK) are required for interaction with CPEB3. Thr-204 bears the Phosphothreonine mark. Residues 228–236 (VHSLYGLGL) carry the Nuclear export signal motif. Residues 234–284 (LGLGSQQQPQPQPQQQQQQQPSSSQPPPPLPQQQQQQPQQQQQQQQQTSAL) are disordered. Composition is skewed to low complexity over residues 238-256 (SQQQPQPQPQQQQQQQPSS) and 265-280 (QQQQQQPQQQQQQQQQ).

Belongs to the BTG family. In terms of assembly, interacts with ERBB2. Interacts with CNOT7. Interacts with CPEB3 (via C-terminal RNA-binding region); recruits CNOT7 to CPEB3 to form a ternary complex required for mRNA deadenylation and decay. Interacts with CNOT8. Interacts with CPEB4. In terms of processing, phosphorylated on Ser and Thr residues. Ubiquitous.

The protein localises to the cytoplasm. It is found in the nucleus. Anti-proliferative protein; the function is mediated by association with deadenylase subunits of the CCR4-NOT complex. Mediates CPEB3-accelerated mRNA deadenylation by binding to CPEB3 and recruiting CNOT7 which leads to target mRNA deadenylation and decay. The chain is Protein Tob1 (Tob1) from Mus musculus (Mouse).